Reading from the N-terminus, the 60-residue chain is Large ribosomal subunit protein uL30 (60 aa).

This sequence belongs to the universal ribosomal protein uL30 family. In terms of assembly, part of the 50S ribosomal subunit.

The protein is Large ribosomal subunit protein uL30 of Idiomarina loihiensis (strain ATCC BAA-735 / DSM 15497 / L2-TR).